A 183-amino-acid polypeptide reads, in one-letter code: Translation initiation factor IF-3 (183 aa).

The protein belongs to the IF-3 family. As to quaternary structure, monomer.

The protein localises to the cytoplasm. Functionally, IF-3 binds to the 30S ribosomal subunit and shifts the equilibrium between 70S ribosomes and their 50S and 30S subunits in favor of the free subunits, thus enhancing the availability of 30S subunits on which protein synthesis initiation begins. This chain is Translation initiation factor IF-3, found in Pseudomonas syringae pv. tomato (strain ATCC BAA-871 / DC3000).